A 345-amino-acid polypeptide reads, in one-letter code: Gibberellin 2-beta-dioxygenase 2 (345 aa).

The Fe2OG dioxygenase domain occupies 170-285 (HSDSLLRINH…RMSMMYFAAP (116 aa)). Fe cation-binding residues include H209, D211, and H266. Residue R276 is part of the active site.

Belongs to the iron/ascorbate-dependent oxidoreductase family. GA2OX subfamily. Fe cation serves as cofactor. In terms of tissue distribution, predominantly expressed in leaves.

It carries out the reaction gibberellin A1 + 2-oxoglutarate + O2 = gibberellin A8 + succinate + CO2. The protein operates within plant hormone biosynthesis; gibberellin biosynthesis. Its function is as follows. Catalyzes the 2-beta-hydroxylation of several biologically active gibberellins, leading to the homeostatic regulation of their endogenous level. Catabolism of gibberellins (GAs) plays a central role in plant development. Converts GA9/GA20 to GA51/GA29 and GA4/GA1 to GA34/GA8. This chain is Gibberellin 2-beta-dioxygenase 2 (GA2OX2), found in Pisum sativum (Garden pea).